The sequence spans 254 residues: GTP cyclohydrolase III (254 aa).

Belongs to the archaeal-type GTP cyclohydrolase family.

It carries out the reaction GTP + 3 H2O = 2-amino-5-formylamino-6-(5-phospho-D-ribosylamino)pyrimidin-4(3H)-one + 2 phosphate + 2 H(+). Its function is as follows. Catalyzes the formation of 2-amino-5-formylamino-6-ribofuranosylamino-4(3H)-pyrimidinone ribonucleotide monophosphate and inorganic phosphate from GTP. Also has an independent pyrophosphate phosphohydrolase activity. This chain is GTP cyclohydrolase III, found in Methanobrevibacter smithii (strain ATCC 35061 / DSM 861 / OCM 144 / PS).